Reading from the N-terminus, the 67-residue chain is Conotoxin Cl6.6b (67 aa).

Positions 1 to 24 (MKLTCVLIAAVLLLAVCQLDSADA) are cleaved as a signal peptide. The propeptide occupies 25 to 37 (TGYMRKNPSLRSP). Intrachain disulfides connect Cys-43–Cys-57, Cys-50–Cys-61, and Cys-56–Cys-65.

The protein belongs to the conotoxin O1 superfamily. As to expression, expressed by the venom duct.

It is found in the secreted. The protein is Conotoxin Cl6.6b of Californiconus californicus (California cone).